The primary structure comprises 136 residues: NADPH-dependent 7-cyano-7-deazaguanine reductase (136 aa).

Cysteine 50 acts as the Thioimide intermediate in catalysis. The active-site Proton donor is the aspartate 57. Substrate contacts are provided by residues 72 to 74 and 91 to 92; these read YEL and HE.

Belongs to the GTP cyclohydrolase I family. QueF type 1 subfamily.

Its subcellular location is the cytoplasm. It carries out the reaction 7-aminomethyl-7-carbaguanine + 2 NADP(+) = 7-cyano-7-deazaguanine + 2 NADPH + 3 H(+). It functions in the pathway tRNA modification; tRNA-queuosine biosynthesis. Catalyzes the NADPH-dependent reduction of 7-cyano-7-deazaguanine (preQ0) to 7-aminomethyl-7-deazaguanine (preQ1). In Prochlorococcus marinus (strain MIT 9515), this protein is NADPH-dependent 7-cyano-7-deazaguanine reductase.